A 448-amino-acid chain; its full sequence is Tubulin beta chain (448 aa).

GTP is bound by residues Q11, E69, S138, G142, T143, G144, N204, and N226. E69 lines the Mg(2+) pocket. Positions 425-448 are disordered; it reads YQDASISEGEEEYLEEEEPLEHEE. Acidic residues predominate over residues 432–448; sequence EGEEEYLEEEEPLEHEE.

This sequence belongs to the tubulin family. As to quaternary structure, dimer of alpha and beta chains. A typical microtubule is a hollow water-filled tube with an outer diameter of 25 nm and an inner diameter of 15 nM. Alpha-beta heterodimers associate head-to-tail to form protofilaments running lengthwise along the microtubule wall with the beta-tubulin subunit facing the microtubule plus end conferring a structural polarity. Microtubules usually have 13 protofilaments but different protofilament numbers can be found in some organisms and specialized cells. Requires Mg(2+) as cofactor.

It is found in the cytoplasm. It localises to the cytoskeleton. Its function is as follows. Tubulin is the major constituent of microtubules, a cylinder consisting of laterally associated linear protofilaments composed of alpha- and beta-tubulin heterodimers. Microtubules grow by the addition of GTP-tubulin dimers to the microtubule end, where a stabilizing cap forms. Below the cap, tubulin dimers are in GDP-bound state, owing to GTPase activity of alpha-tubulin. This is Tubulin beta chain (benA56) from Aspergillus oryzae (strain ATCC 42149 / RIB 40) (Yellow koji mold).